The primary structure comprises 657 residues: 9-cis-epoxycarotenoid dioxygenase NCED9, chloroplastic (657 aa).

4 residues coordinate Fe cation: His357, His406, His471, and His642.

The protein belongs to the carotenoid oxygenase family. Fe(2+) is required as a cofactor. Expressed in developing siliques, embryo and endosperm.

It is found in the plastid. Its subcellular location is the chloroplast stroma. The enzyme catalyses a 9-cis-epoxycarotenoid + O2 = a 12'-apo-carotenal + 2-cis,4-trans-xanthoxin. It catalyses the reaction 9-cis-violaxanthin + O2 = (3S,5R,6S)-5,6-epoxy-3-hydroxy-5,6-dihydro-12'-apo-beta-caroten-12'-al + 2-cis,4-trans-xanthoxin. It carries out the reaction 9'-cis-neoxanthin + O2 = (3S,5R,6R)-3,5-dihydroxy-6,7-didehydro-5,6-dihydro-12'-apo-beta-caroten-12'-al + 2-cis,4-trans-xanthoxin. Functionally, has a 11,12(11',12') 9-cis epoxycarotenoid cleavage activity. Catalyzes the first step of abscisic-acid biosynthesis from carotenoids. Contributes probably to abscisic acid synthesis for the induction of seed dormancy. The chain is 9-cis-epoxycarotenoid dioxygenase NCED9, chloroplastic (NCED9) from Arabidopsis thaliana (Mouse-ear cress).